The chain runs to 141 residues: MMGLPLMAVPMLLDTGADPVYLARQWARMYYYGVRTMPPLAITTFILYVWTIIRRRSQHQAWYILAVAAVVTMGMIPFTWYVLAPTNNALFRLAEGPEAASGTTAGSLEEVTELLVRWNKLHIARSLFPLTGVVIALSDAM.

The N-terminal stretch at 1–19 (MMGLPLMAVPMLLDTGADP) is a signal peptide. 2 consecutive transmembrane segments (helical) span residues 33 to 53 (GVRT…WTII) and 64 to 84 (ILAV…YVLA).

Belongs to the anthrone oxygenase family.

The protein localises to the membrane. Its pathway is secondary metabolite biosynthesis. Its function is as follows. Anthrone oxygenase; part of the gene cluster that mediates the biosynthesis of pestheic acid, a diphenyl ether which is a biosynthetic precursor of the unique chloropupukeananes. The biosynthesis initiates from condensation of acetate and malonate units catalyzed by the non-reducing PKS ptaA. As the ptaA protein is TE/CLC domain-deficient, hydrolysis and Claisen cyclization of the polyketide could be catalyzed by ptaB containing a beta-lactamase domain. The ptaB protein might hydrolyze the thioester bond between the ACP of ptaA and the intermediate to release atrochrysone carboxylic acid, which is spontaneously dehydrated to form endocrocin anthrone. Endocrocin anthrone is then converted to endocrocin, catalyzed by the anthrone oxygenase ptaC. Spontaneous decarboxylation of endocrocin occurs to generate emodin. An O-methyltransferase (ptaH or ptaI) could methylate emodin to form physcion. PtaJ could then catalyze the oxidative cleavage of physcion, and rotation of the intermediate could then afford desmethylisosulochrin. PtaF, a putative NADH-dependent oxidoreductase, might also participate in the oxidative cleavage step. Desmethylisosulochrin is then transformed by another O-methyltransferase (ptaH or ptaI) to form isosulochrin. Chlorination of isosulochrin by ptaM in the cyclohexadienone B ring then produces chloroisosulochrin. PtaE is responsible for the oxidative coupling reactions of both benzophenones isosulochrin and chloroisosulochrin to RES-1214-1 and pestheic acid respectively, regardless of chlorination. This chain is Anthrone oxygenase ptaC, found in Pestalotiopsis fici (strain W106-1 / CGMCC3.15140).